A 369-amino-acid chain; its full sequence is Maltose/maltodextrin import ATP-binding protein MalK (369 aa).

In terms of domain architecture, ABC transporter spans 4 to 234 (VQLRNVTKAW…PADRFVAGFI (231 aa)). An ATP-binding site is contributed by 36 to 43 (GPSGCGKS).

Belongs to the ABC transporter superfamily. Maltooligosaccharide importer (TC 3.A.1.1.1) family. As to quaternary structure, the complex is composed of two ATP-binding proteins (MalK), two transmembrane proteins (MalG and MalK) and a solute-binding protein (MalE).

The protein resides in the cell inner membrane. The catalysed reaction is D-maltose(out) + ATP + H2O = D-maltose(in) + ADP + phosphate + H(+). Part of the ABC transporter complex MalEFGK involved in maltose/maltodextrin import. Responsible for energy coupling to the transport system. In Salmonella typhi, this protein is Maltose/maltodextrin import ATP-binding protein MalK.